We begin with the raw amino-acid sequence, 293 residues long: Homoserine kinase (293 aa).

ATP is bound at residue 84-94 (PISRGLGSSSA).

Belongs to the GHMP kinase family. Homoserine kinase subfamily.

It is found in the cytoplasm. It catalyses the reaction L-homoserine + ATP = O-phospho-L-homoserine + ADP + H(+). The protein operates within amino-acid biosynthesis; L-threonine biosynthesis; L-threonine from L-aspartate: step 4/5. In terms of biological role, catalyzes the ATP-dependent phosphorylation of L-homoserine to L-homoserine phosphate. The sequence is that of Homoserine kinase from Wolinella succinogenes (strain ATCC 29543 / DSM 1740 / CCUG 13145 / JCM 31913 / LMG 7466 / NCTC 11488 / FDC 602W) (Vibrio succinogenes).